The chain runs to 100 residues: C-X-C motif chemokine 2 (100 aa).

The N-terminal stretch at 1–27 (MAPPTCRLLSAALVLLLLLATNHQATG) is a signal peptide. Intrachain disulfides connect C36-C62 and C38-C78.

The protein belongs to the intercrine alpha (chemokine CxC) family. As to quaternary structure, homotetramer.

It is found in the secreted. Its function is as follows. Chemotactic for human polymorphonuclear leukocytes but does not induce chemokinesis or an oxidative burst. This is C-X-C motif chemokine 2 (Cxcl2) from Mus musculus (Mouse).